Consider the following 214-residue polypeptide: UPF0056 membrane protein aq_540 (214 aa).

The next 6 membrane-spanning stretches (helical) occupy residues 17-37 (FLSL…ISLM), 47-67 (VIAL…LISG), 73-93 (FMGI…FLIA), 122-142 (LIPL…VLVL), 153-173 (VALF…YSLS), and 185-205 (INLI…QFVV).

This sequence belongs to the UPF0056 (MarC) family.

It is found in the cell membrane. This Aquifex aeolicus (strain VF5) protein is UPF0056 membrane protein aq_540.